We begin with the raw amino-acid sequence, 383 residues long: Mannitol-1-phosphate 5-dehydrogenase (383 aa).

3 to 14 (ALHFGAGNIGRG) is an NAD(+) binding site.

The protein belongs to the mannitol dehydrogenase family.

The enzyme catalyses D-mannitol 1-phosphate + NAD(+) = beta-D-fructose 6-phosphate + NADH + H(+). This is Mannitol-1-phosphate 5-dehydrogenase from Serratia proteamaculans (strain 568).